The sequence spans 208 residues: Small ribosomal subunit protein uS5 (208 aa).

Positions 48 to 111 constitute an S5 DRBM domain; that stretch reads LEDEVLDINM…DAAKLDITYI (64 aa).

The protein belongs to the universal ribosomal protein uS5 family. As to quaternary structure, part of the 30S ribosomal subunit. Contacts protein S4.

With S4 and S12 plays an important role in translational accuracy. The polypeptide is Small ribosomal subunit protein uS5 (Methanosarcina barkeri (strain Fusaro / DSM 804)).